The following is a 237-amino-acid chain: LexA repressor (237 aa).

The segment at residues 26–46 (FDEMKDALDLRSKSGIHRLIT) is a DNA-binding region (H-T-H motif). Catalysis depends on for autocatalytic cleavage activity residues Ser158 and Lys196.

Belongs to the peptidase S24 family. As to quaternary structure, homodimer.

The catalysed reaction is Hydrolysis of Ala-|-Gly bond in repressor LexA.. Functionally, represses a number of genes involved in the response to DNA damage (SOS response), including recA and lexA. In the presence of single-stranded DNA, RecA interacts with LexA causing an autocatalytic cleavage which disrupts the DNA-binding part of LexA, leading to derepression of the SOS regulon and eventually DNA repair. This is LexA repressor from Rhodopseudomonas palustris (strain BisA53).